Reading from the N-terminus, the 315-residue chain is MSLEQRSPHCKPDEDLEAQGEDLGLMGAQEPTGEEEETTSSSDSKEEEVSAAGSSSPPQSPQGGASSSISVYYTLWSQFDEGSSSQEEEEPSSSVDPAQLEFMFQEALKLKVAELVHFLLHKYRVKEPVTKAEMLESVIKNYKRYFPVIFGKASEFMQVIFGTDVKEVDPAGHSYILVTALGLSCDSMLGDGHSMPKAALLIIVLGVILTKDNCAPEEVIWEALSVMGVYVGKEHMFYGEPRKLLTQDWVQENYLEYRQVPGSDPAHYEFLWGSKAHAETSYEKVINYLVMLNAREPICYPSLYEEVLGEEQEGV.

Positions Met-1–Asp-13 are enriched in basic and acidic residues. The tract at residues Met-1–Ser-67 is disordered. Residues Ser-50 to Ser-67 are compositionally biased toward low complexity. The MAGE domain maps to Leu-108–Val-307.

As to expression, expressed in many tumors of several types, such as melanoma, head and neck squamous cell carcinoma, lung carcinoma and breast carcinoma, but not in normal tissues except for testes and placenta.

Not known, though may play a role in embryonal development and tumor transformation or aspects of tumor progression. The polypeptide is Melanoma-associated antigen 9 (MAGEA9) (Homo sapiens (Human)).